Consider the following 346-residue polypeptide: Serine/threonine-protein phosphatase PP1(5.9) (346 aa).

Mn(2+) contacts are provided by Asp102, His104, Asp130, and Asn162. The Proton donor role is filled by His163. Positions 211 and 287 each coordinate Mn(2+).

The protein belongs to the PPP phosphatase family. PP-1 subfamily. Mn(2+) is required as a cofactor.

The catalysed reaction is O-phospho-L-seryl-[protein] + H2O = L-seryl-[protein] + phosphate. The enzyme catalyses O-phospho-L-threonyl-[protein] + H2O = L-threonyl-[protein] + phosphate. This chain is Serine/threonine-protein phosphatase PP1(5.9), found in Trypanosoma brucei brucei.